A 392-amino-acid polypeptide reads, in one-letter code: Homoserine O-acetyltransferase (392 aa).

In terms of domain architecture, AB hydrolase-1 spans 52-356; it reads NVVVVLHALT…ICGHDGFLVE (305 aa). Ser157 acts as the Nucleophile in catalysis. Arg227 is a substrate binding site. Catalysis depends on residues Asp320 and His350. Asp351 is a substrate binding site. The tract at residues 373 to 392 is disordered; sequence SQSAGPGGAGPGSRKGTTRR.

The protein belongs to the AB hydrolase superfamily. MetX family. As to quaternary structure, homodimer.

It localises to the cytoplasm. The catalysed reaction is L-homoserine + acetyl-CoA = O-acetyl-L-homoserine + CoA. Its pathway is amino-acid biosynthesis; L-methionine biosynthesis via de novo pathway; O-acetyl-L-homoserine from L-homoserine: step 1/1. Its function is as follows. Transfers an acetyl group from acetyl-CoA to L-homoserine, forming acetyl-L-homoserine. The protein is Homoserine O-acetyltransferase of Mycolicibacterium paratuberculosis (strain ATCC BAA-968 / K-10) (Mycobacterium paratuberculosis).